The following is a 340-amino-acid chain: 4-amino-5-hydroxymethyl-2-methylpyrimidine phosphate synthase THI12 (340 aa).

The residue at position 62 (Lys62) is an N6-(pyridoxal phosphate)lysine. His66 is an active-site residue. Position 115–118 (115–118 (GEFG)) interacts with pyridoxal 5'-phosphate. A CCCFC; essential for catalytic activity, may be the site of iron coordination motif is present at residues 195 to 199 (CCCFC).

This sequence belongs to the NMT1/THI5 family. As to quaternary structure, homodimer. The cofactor is Fe cation.

The catalysed reaction is N(6)-(pyridoxal phosphate)-L-lysyl-[4-amino-5-hydroxymethyl-2-methylpyrimidine phosphate synthase] + L-histidyl-[4-amino-5-hydroxymethyl-2-methylpyrimidine phosphate synthase] + 2 Fe(3+) + 4 H2O = L-lysyl-[4-amino-5-hydroxymethyl-2-methylpyrimidine phosphate synthase] + (2S)-2-amino-5-hydroxy-4-oxopentanoyl-[4-amino-5-hydroxymethyl-2-methylpyrimidine phosphate synthase] + 4-amino-2-methyl-5-(phosphooxymethyl)pyrimidine + 3-oxopropanoate + 2 Fe(2+) + 2 H(+). The protein operates within cofactor biosynthesis; thiamine diphosphate biosynthesis. Its function is as follows. Responsible for the formation of the pyrimidine heterocycle in the thiamine biosynthesis pathway. Catalyzes the formation of hydroxymethylpyrimidine phosphate (HMP-P) from histidine and pyridoxal phosphate (PLP). The protein uses PLP and the active site histidine to form HMP-P, generating an inactive enzyme. The enzyme can only undergo a single turnover, which suggests it is a suicide enzyme. The sequence is that of 4-amino-5-hydroxymethyl-2-methylpyrimidine phosphate synthase THI12 from Saccharomyces cerevisiae (strain ATCC 204508 / S288c) (Baker's yeast).